Consider the following 524-residue polypeptide: D-3-phosphoglycerate dehydrogenase (524 aa).

NAD(+) contacts are provided by residues 149–150, D169, 229–231, and D255; these read RI and CAR. R231 is a catalytic residue. The active site involves E260. The Proton donor role is filled by H278. 278–281 is an NAD(+) binding site; the sequence is HQGA. Residues 452-524 enclose the ACT domain; it reads LAIIKHIDRP…NIKDVAVINL (73 aa).

This sequence belongs to the D-isomer specific 2-hydroxyacid dehydrogenase family.

The enzyme catalyses (2R)-3-phosphoglycerate + NAD(+) = 3-phosphooxypyruvate + NADH + H(+). Its pathway is amino-acid biosynthesis; L-serine biosynthesis; L-serine from 3-phospho-D-glycerate: step 1/3. This Methanocaldococcus jannaschii (strain ATCC 43067 / DSM 2661 / JAL-1 / JCM 10045 / NBRC 100440) (Methanococcus jannaschii) protein is D-3-phosphoglycerate dehydrogenase (serA).